The primary structure comprises 143 residues: Transcriptional regulator MraZ (143 aa).

SpoVT-AbrB domains are found at residues 5–47 (EYRH…PQVE) and 76–119 (ATEC…SKEL).

It belongs to the MraZ family. As to quaternary structure, forms oligomers.

The protein localises to the cytoplasm. It is found in the nucleoid. This Halalkalibacterium halodurans (strain ATCC BAA-125 / DSM 18197 / FERM 7344 / JCM 9153 / C-125) (Bacillus halodurans) protein is Transcriptional regulator MraZ.